A 141-amino-acid polypeptide reads, in one-letter code: Anthrone oxygenase ptaC (141 aa).

Residues 1 to 19 form the signal peptide; it reads MMGLPLMAVPMLLDTGADP. 2 helical membrane passes run 33-53 and 64-84; these read GVRT…WTII and ILAV…YVLA.

The protein belongs to the anthrone oxygenase family.

The protein resides in the membrane. The protein operates within secondary metabolite biosynthesis. Anthrone oxygenase; part of the gene cluster that mediates the biosynthesis of pestheic acid, a diphenyl ether which is a biosynthetic precursor of the unique chloropupukeananes. The biosynthesis initiates from condensation of acetate and malonate units catalyzed by the non-reducing PKS ptaA. As the ptaA protein is TE/CLC domain-deficient, hydrolysis and Claisen cyclization of the polyketide could be catalyzed by ptaB containing a beta-lactamase domain. The ptaB protein might hydrolyze the thioester bond between the ACP of ptaA and the intermediate to release atrochrysone carboxylic acid, which is spontaneously dehydrated to form endocrocin anthrone. Endocrocin anthrone is then converted to endocrocin, catalyzed by the anthrone oxygenase ptaC. Spontaneous decarboxylation of endocrocin occurs to generate emodin. An O-methyltransferase (ptaH or ptaI) could methylate emodin to form physcion. PtaJ could then catalyze the oxidative cleavage of physcion, and rotation of the intermediate could then afford desmethylisosulochrin. PtaF, a putative NADH-dependent oxidoreductase, might also participate in the oxidative cleavage step. Desmethylisosulochrin is then transformed by another O-methyltransferase (ptaH or ptaI) to form isosulochrin. Chlorination of isosulochrin by ptaM in the cyclohexadienone B ring then produces chloroisosulochrin. PtaE is responsible for the oxidative coupling reactions of both benzophenones isosulochrin and chloroisosulochrin to RES-1214-1 and pestheic acid respectively, regardless of chlorination. The polypeptide is Anthrone oxygenase ptaC (Pestalotiopsis fici (strain W106-1 / CGMCC3.15140)).